Here is a 384-residue protein sequence, read N- to C-terminus: Proteinase K (384 aa).

The N-terminal stretch at 1 to 15 (MRLSVLLSLLPLALG) is a signal peptide. A propeptide spanning residues 16 to 105 (APAVEQRSEA…IEQDAVVTIN (90 aa)) is cleaved from the precursor. The Inhibitor I9 domain maps to 39-104 (KYIVKFKEGS…YIEQDAVVTI (66 aa)). The 273-residue stretch at 112–384 (PWGLARISST…NLLAYNNYQA (273 aa)) folds into the Peptidase S8 domain. T121 contributes to the Ca(2+) binding site. C139 and C228 are joined by a disulfide. Catalysis depends on charge relay system residues D144 and H174. Positions 280, 282, and 305 each coordinate Ca(2+). A disulfide bridge links C283 with C354. S329 serves as the catalytic Charge relay system. D365 is a binding site for Ca(2+).

Belongs to the peptidase S8 family. The cofactor is Ca(2+).

It carries out the reaction Hydrolysis of keratin, and of other proteins with subtilisin-like specificity. Hydrolyzes peptide amides.. In terms of biological role, hydrolyzes keratin at aromatic and hydrophobic residues. This is Proteinase K (PROK) from Parengyodontium album (Tritirachium album).